The primary structure comprises 115 residues: Large ribosomal subunit protein P2y (115 aa).

Residues 63–115 (ASVPSGGGGGVAVASATSGGGGGGGASAAESKKEEKKEEKEESDDDMGFSLFE) are disordered. The segment covering 92–102 (ESKKEEKKEEK) has biased composition (basic and acidic residues). A Phosphoserine modification is found at S105.

It belongs to the eukaryotic ribosomal protein P1/P2 family. In terms of assembly, P1 and P2 exist as dimers at the large ribosomal subunit. In terms of processing, phosphorylated.

Its function is as follows. Plays an important role in the elongation step of protein synthesis. The polypeptide is Large ribosomal subunit protein P2y (RPP2B) (Arabidopsis thaliana (Mouse-ear cress)).